Here is a 333-residue protein sequence, read N- to C-terminus: MLKIAIDVMGADNGVTPIVQGVIQALKSRDFNAVIIGDEAQIAPLVPPYLQSRAQIVHCTDYIRMEESASAAAKRTQSSIFKTTELLKNGDVDALVSPGHSGATMSLATLKIGRIKGVSRPAICTTMPNTTDKPSIILDAGANTDCKPEYLVDFAIMGYEYAKNVIGFENPRVGLLSNGEEDNKGNELTKATFKLLKEFSFFKGNVEGRDIFNGSVDVIVCDGFSGNLVLKASEGVASAMSSVLKKDIKSCLCSMFGALFLRGVFKRLKKKMDHSEYGGAPLLGVQKVVIISHGSANARAIECAIYQALNAIESNICSKLSDAFANKPSSAQQ.

This sequence belongs to the PlsX family. As to quaternary structure, homodimer. Probably interacts with PlsY.

Its subcellular location is the cytoplasm. The enzyme catalyses a fatty acyl-[ACP] + phosphate = an acyl phosphate + holo-[ACP]. It participates in lipid metabolism; phospholipid metabolism. Its function is as follows. Catalyzes the reversible formation of acyl-phosphate (acyl-PO(4)) from acyl-[acyl-carrier-protein] (acyl-ACP). This enzyme utilizes acyl-ACP as fatty acyl donor, but not acyl-CoA. This Helicobacter hepaticus (strain ATCC 51449 / 3B1) protein is Phosphate acyltransferase.